The sequence spans 353 residues: Serine/threonine-protein kinase SRK2G (353 aa).

The Protein kinase domain maps to 4–260 (YDVVKDLGAG…LKEIKNHPWY (257 aa)). Residues 10–18 (LGAGNFGVA) and Lys-33 contribute to the ATP site. Catalysis depends on Asp-123, which acts as the Proton acceptor. Positions 299-353 (RNPAPSTSAVKSSGSGADEEEEEDVEAEVEEEEDDEDEYEKHVKEAQSCQESDKA) are disordered. The segment covering 302 to 313 (APSTSAVKSSGS) has biased composition (polar residues). Acidic residues predominate over residues 315–336 (ADEEEEEDVEAEVEEEEDDEDE). The segment covering 337–353 (YEKHVKEAQSCQESDKA) has biased composition (basic and acidic residues).

The protein belongs to the protein kinase superfamily. Ser/Thr protein kinase family. Expressed in seedlings.

Its subcellular location is the nucleus. It carries out the reaction L-seryl-[protein] + ATP = O-phospho-L-seryl-[protein] + ADP + H(+). The enzyme catalyses L-threonyl-[protein] + ATP = O-phospho-L-threonyl-[protein] + ADP + H(+). This chain is Serine/threonine-protein kinase SRK2G (SRK2G), found in Arabidopsis thaliana (Mouse-ear cress).